We begin with the raw amino-acid sequence, 91 residues long: Small ribosomal subunit protein bS16c (91 aa).

The protein belongs to the bacterial ribosomal protein bS16 family.

It localises to the plastid. It is found in the chloroplast. The polypeptide is Small ribosomal subunit protein bS16c (Pelargonium hortorum (Common geranium)).